We begin with the raw amino-acid sequence, 274 residues long: Orotidine 5'-phosphate decarboxylase (274 aa).

Substrate-binding positions include D40, 62–64 (KTH), 93–102 (DRKFVDIGNT), Y227, and R245. K95 serves as the catalytic Proton donor.

It belongs to the OMP decarboxylase family.

It catalyses the reaction orotidine 5'-phosphate + H(+) = UMP + CO2. The protein operates within pyrimidine metabolism; UMP biosynthesis via de novo pathway; UMP from orotate: step 2/2. This Coccidioides immitis (strain RS) (Valley fever fungus) protein is Orotidine 5'-phosphate decarboxylase (URA3).